We begin with the raw amino-acid sequence, 185 residues long: Ribosome-recycling factor (185 aa).

Belongs to the RRF family.

The protein localises to the cytoplasm. Functionally, responsible for the release of ribosomes from messenger RNA at the termination of protein biosynthesis. May increase the efficiency of translation by recycling ribosomes from one round of translation to another. The protein is Ribosome-recycling factor of Hydrogenovibrio crunogenus (strain DSM 25203 / XCL-2) (Thiomicrospira crunogena).